The chain runs to 2697 residues: Target of rapamycin homolog (2697 aa).

The interval 1–25 is disordered; the sequence is MLQQHGISFQMNADRQNKAATTSNR. 7 HEAT repeats span residues 235–272, 649–687, 689–726, 731–768, 815–853, 863–900, and 1073–1110; these read LRVN…IVSQ, QTIY…PFLA, LAQP…LNPA, RLRL…QSPK, KNLK…STAY, SLLD…YTHK, and KYTG…LTHC. The FAT domain maps to 1438 to 2153; that stretch reads VLGRWAEQTK…IYALTVASRS (716 aa). Disordered regions lie at residues 1945-1981 and 2017-2039; these read TVIS…PQPA and SNSS…PSNS. Residues 1969 to 1981 are compositionally biased toward pro residues; that stretch reads SPPPPAQKSPQPA. A compositionally biased stretch (polar residues) spans 2030–2039; sequence PLSNDSPSNS. Residues 2332-2647 form the PI3K/PI4K catalytic domain; that stretch reads FSSKMNVITS…TTDSIMETIK (316 aa). Positions 2338-2344 are G-loop; sequence VITSKQR. A catalytic loop region spans residues 2512–2520; the sequence is GLGDRHPSN. The tract at residues 2532-2557 is activation loop; that stretch reads HIDFGDCFEVAMLREKFPERVPFRLT. A disordered region spans residues 2615–2635; the sequence is DPKTRKDTGGRQNMAGAVLPS. The 33-residue stretch at 2665-2697 folds into the FATC domain; the sequence is EPLQVTEQLAMLTEQATSPLNLCQSYIGWCPFW.

The protein belongs to the PI3/PI4-kinase family. In terms of tissue distribution, ubiquitous. Expressed in all major tissues and organs, including the intestine, gonads and hypodermal cells. Expressed in neurons.

It localises to the nucleus. It catalyses the reaction L-seryl-[protein] + ATP = O-phospho-L-seryl-[protein] + ADP + H(+). It carries out the reaction L-threonyl-[protein] + ATP = O-phospho-L-threonyl-[protein] + ADP + H(+). Its function is as follows. Serine/threonine-protein kinase that regulates the mRNA translation machinery, probably by modulating the activity of translation factors such as eIF-4G and eIF-2. It may have some protein kinase activity instead of lipid kinase activity. May play a role in P-granule degradation by autophagy in somatic cells during embryogenesis. Required, during larval development, for the establishment of the proper number of germline progenitors, probably upstream of rsks-1 and ife-1. Required for larval development. May act as a mediator of lifespan regulation by insulin signaling and nutrient sensing. In Caenorhabditis elegans, this protein is Target of rapamycin homolog.